The chain runs to 176 residues: Adenine phosphoribosyltransferase (176 aa).

This sequence belongs to the purine/pyrimidine phosphoribosyltransferase family. Homodimer.

The protein localises to the cytoplasm. The enzyme catalyses AMP + diphosphate = 5-phospho-alpha-D-ribose 1-diphosphate + adenine. Its pathway is purine metabolism; AMP biosynthesis via salvage pathway; AMP from adenine: step 1/1. Functionally, catalyzes a salvage reaction resulting in the formation of AMP, that is energically less costly than de novo synthesis. The polypeptide is Adenine phosphoribosyltransferase (Leuconostoc mesenteroides subsp. mesenteroides (strain ATCC 8293 / DSM 20343 / BCRC 11652 / CCM 1803 / JCM 6124 / NCDO 523 / NBRC 100496 / NCIMB 8023 / NCTC 12954 / NRRL B-1118 / 37Y)).